The chain runs to 178 residues: MADGKAGEEKPEKSQRAGAAGGPEEEAEKPVKTKTVSSSNGGESSSRSAEKRSAEEEAVDLPTKPTKISKFGFAIGSQTTKKASAISIKLGSSKPKETVPTLAPKTLSVAAAFNEDEDSEPEEMPPEAKMRMKNIGRDTPTSAGPNSFNKGKHGFSDNQKLWERNIKSHLGNVHDQDN.

A compositionally biased stretch (basic and acidic residues) spans 1-15; that stretch reads MADGKAGEEKPEKSQ. The interval 1 to 84 is disordered; it reads MADGKAGEEK…IGSQTTKKAS (84 aa). An N-acetylalanine modification is found at alanine 2. The segment covering 37–47 has biased composition (low complexity); sequence SSSNGGESSSR. At serine 53 the chain carries Phosphoserine. At lysine 64 the chain carries N6-acetyllysine. Phosphoserine occurs at positions 77, 87, and 119. A disordered region spans residues 134-178; the sequence is NIGRDTPTSAGPNSFNKGKHGFSDNQKLWERNIKSHLGNVHDQDN. At threonine 139 the chain carries Phosphothreonine. Positions 139–149 are enriched in polar residues; it reads TPTSAGPNSFN. The residue at position 147 (serine 147) is a Phosphoserine. Residues lysine 150 and lysine 152 each carry the N6-acetyllysine modification. A compositionally biased stretch (basic and acidic residues) spans 160-178; it reads KLWERNIKSHLGNVHDQDN.

In terms of assembly, interacts with UHRF2/NIRF. Ubiquitinated; mediated by UHRF2 and leading to its subsequent proteasomal degradation. Post-translationally, N-terminally acetylated in a HYPK-dependent manner by the NatA acetyltransferase complex which is composed of NAA10 and NAA15.

It localises to the nucleus. Functionally, may be involved in cell cycle regulation. This Pongo abelii (Sumatran orangutan) protein is PEST proteolytic signal-containing nuclear protein (PCNP).